Here is a 261-residue protein sequence, read N- to C-terminus: Small ribosomal subunit protein uS2 (261 aa).

Residues 224–261 (GRQGEDDEAVQQEEVAEGVSKDSLEDLKKTVEEGSNEE) form a disordered region. Residues 228–239 (EDDEAVQQEEVA) are compositionally biased toward acidic residues. Residues 242–255 (VSKDSLEDLKKTVE) are compositionally biased toward basic and acidic residues.

It belongs to the universal ribosomal protein uS2 family.

The chain is Small ribosomal subunit protein uS2 (rpsB) from Pediococcus acidilactici.